The primary structure comprises 78 residues: Probable Vpr-like protein (78 aa).

A Nuclear export signal motif is present at residues A35–F43. The Nuclear localization signal motif lies at R45 to D54.

It is found in the virion. It localises to the host nucleus. Its function is as follows. Seems to function as a Vpr-like protein, since it mediates host cell cycle arrest in G2 phase. Cell cycle arrest creates a favorable environment for maximizing viral expression and production. In Feline immunodeficiency virus (isolate Petaluma) (FIV), this protein is Probable Vpr-like protein.